The primary structure comprises 272 residues: Putative protein-disulfide oxidoreductase RP025 (272 aa).

Positions 1-21 are cleaved as a signal peptide; sequence MRNIFIVLIFLFLSNCSEVKA. Residues 74–263 enclose the Thioredoxin domain; that stretch reads DSREQKKPEI…ISKAVDKALD (190 aa). An intrachain disulfide couples cysteine 116 to cysteine 119.

This sequence belongs to the thioredoxin family. DsbA subfamily.

The protein localises to the periplasm. In terms of biological role, may be required for disulfide bond formation in some proteins. This chain is Putative protein-disulfide oxidoreductase RP025, found in Rickettsia prowazekii (strain Madrid E).